We begin with the raw amino-acid sequence, 201 residues long: Ciliary microtubule inner protein 2C (201 aa).

The protein belongs to the CIMIP2 family. In terms of assembly, microtubule inner protein component of sperm flagellar doublet microtubules.

It is found in the cytoplasm. It localises to the cytoskeleton. The protein localises to the cilium axoneme. The protein resides in the flagellum axoneme. Its function is as follows. Microtubule inner protein (MIP) part of the dynein-decorated doublet microtubules (DMTs) in cilia axoneme, which is required for motile cilia beating. Binds to the intra-tubulin interfaces. This is Ciliary microtubule inner protein 2C (CIMIP2C) from Bos taurus (Bovine).